The chain runs to 103 residues: UPF0145 protein HH_1800 (103 aa).

The protein belongs to the UPF0145 family.

The sequence is that of UPF0145 protein HH_1800 from Helicobacter hepaticus (strain ATCC 51449 / 3B1).